The following is a 230-amino-acid chain: Ribosomal RNA large subunit methyltransferase E (230 aa).

A compositionally biased stretch (gly residues) spans 1–13 (MSGSGGKGGGRGG). Positions 1–22 (MSGSGGKGGGRGGLHVRVKTAK) are disordered. 5 residues coordinate S-adenosyl-L-methionine: G81, W83, D100, D116, and D140. The active-site Proton acceptor is the K180.

This sequence belongs to the class I-like SAM-binding methyltransferase superfamily. RNA methyltransferase RlmE family.

The protein resides in the cytoplasm. It catalyses the reaction uridine(2552) in 23S rRNA + S-adenosyl-L-methionine = 2'-O-methyluridine(2552) in 23S rRNA + S-adenosyl-L-homocysteine + H(+). Functionally, specifically methylates the uridine in position 2552 of 23S rRNA at the 2'-O position of the ribose in the fully assembled 50S ribosomal subunit. This chain is Ribosomal RNA large subunit methyltransferase E, found in Sphingopyxis alaskensis (strain DSM 13593 / LMG 18877 / RB2256) (Sphingomonas alaskensis).